A 159-amino-acid chain; its full sequence is Putative ribosomal RNA large subunit methyltransferase H (159 aa).

S-adenosyl-L-methionine contacts are provided by residues leucine 76, glycine 108, and 127 to 132 (FSKMTF).

Belongs to the RNA methyltransferase RlmH family.

It is found in the cytoplasm. It catalyses the reaction pseudouridine(1915) in 23S rRNA + S-adenosyl-L-methionine = N(3)-methylpseudouridine(1915) in 23S rRNA + S-adenosyl-L-homocysteine + H(+). Its function is as follows. Specifically methylates the pseudouridine at position 1915 (m3Psi1915) in 23S rRNA. This is Putative ribosomal RNA large subunit methyltransferase H from Methanococcus maripaludis (strain C6 / ATCC BAA-1332).